We begin with the raw amino-acid sequence, 254 residues long: Alcohol dehydrogenase 1 (254 aa).

NAD(+) is bound at residue 10 to 33; the sequence is FVAGLGGIGFDTSREIVKSGPKNL. Ser138 contributes to the substrate binding site. Catalysis depends on Tyr151, which acts as the Proton acceptor.

The protein belongs to the short-chain dehydrogenases/reductases (SDR) family. Homodimer.

It catalyses the reaction a primary alcohol + NAD(+) = an aldehyde + NADH + H(+). The enzyme catalyses a secondary alcohol + NAD(+) = a ketone + NADH + H(+). This is Alcohol dehydrogenase 1 (Adh1) from Drosophila mulleri (Fruit fly).